The following is a 159-amino-acid chain: SsrA-binding protein (159 aa).

Belongs to the SmpB family.

Its subcellular location is the cytoplasm. In terms of biological role, required for rescue of stalled ribosomes mediated by trans-translation. Binds to transfer-messenger RNA (tmRNA), required for stable association of tmRNA with ribosomes. tmRNA and SmpB together mimic tRNA shape, replacing the anticodon stem-loop with SmpB. tmRNA is encoded by the ssrA gene; the 2 termini fold to resemble tRNA(Ala) and it encodes a 'tag peptide', a short internal open reading frame. During trans-translation Ala-aminoacylated tmRNA acts like a tRNA, entering the A-site of stalled ribosomes, displacing the stalled mRNA. The ribosome then switches to translate the ORF on the tmRNA; the nascent peptide is terminated with the 'tag peptide' encoded by the tmRNA and targeted for degradation. The ribosome is freed to recommence translation, which seems to be the essential function of trans-translation. This chain is SsrA-binding protein, found in Saccharophagus degradans (strain 2-40 / ATCC 43961 / DSM 17024).